A 228-amino-acid chain; its full sequence is MKPSAVNQILQQTQHFFARFDVHLPPFAHFSPAVWQQLDRQPWQEVFDLKLGWDVTAFGDDDFARKGLTLFTLRNGSPGGKPYAKGYAEKIMHCREAQVTPMHFHWRKREDIINRGGGNLIVELHNADTRDGLAETAVTVTLDGCRQTHAAGSRLRLAPGESICLTPAIYHSFWGEEGFGDVLVGEVSTVNDDDNDNRFLQPLSRFSQIEEDQPPQWLLCHEYLRFIA.

Mn(2+)-binding residues include His-103, His-105, Glu-110, and His-171.

The protein belongs to the D-lyxose ketol-isomerase family. Homodimer. Mn(2+) serves as cofactor.

The catalysed reaction is D-lyxose = D-xylulose. It carries out the reaction D-mannose = D-fructose. Its function is as follows. Sugar isomerase that catalyzes the reversible isomerization of D-lyxose to D-xylulose, and D-mannose to D-fructose. Shows optimum activity using D-lyxose as substrate, but can also effectively catalyze the isomerization between D-fructose and D-mannose. Shows lower activity with L-gulose, D-talose and L-ribose. This is D-lyxose/D-mannose isomerase from Serratia proteamaculans.